Reading from the N-terminus, the 180-residue chain is Dynactin subunit 6 (180 aa).

Belongs to the dynactin subunits 5/6 family. Dynactin subunit 6 subfamily. As to quaternary structure, subunit of dynactin, a multiprotein complex part of a tripartite complex with dynein and a adapter, such as BICDL1, BICD2 or HOOK3. The dynactin complex is built around ACTR1A/ACTB filament and consists of an actin-related filament composed of a shoulder domain, a pointed end and a barbed end.

Its subcellular location is the cytoplasm. The protein localises to the cytoskeleton. Part of the dynactin complex that activates the molecular motor dynein for ultra-processive transport along microtubules. This chain is Dynactin subunit 6 (dnc-6), found in Caenorhabditis elegans.